The sequence spans 2534 residues: Highly reducing polyketide synthase easB (2534 aa).

The interval 1-49 is disordered; sequence MSPASRSRVEIADSESDSERLSSSPWSILSDNDSNTSDERSTRAGPGSL. The Ketosynthase family 3 (KS3) domain occupies 49-470; the sequence is LEPIAVIGIG…GTNAHVIIDA (422 aa). Catalysis depends on for beta-ketoacyl synthase activity residues Cys222, His356, and His396. The interval 587 to 885 is malonyl-CoA:ACP transacylase (MAT) domain; the sequence is IFSGQGAQYA…LSGPVNQILK (299 aa). The tract at residues 973–1111 is N-terminal hotdog fold; sequence HELLGTLSAD…GLVQAEVDSV (139 aa). Residues 973–1273 are dehydratase (DH) domain; sequence HELLGTLSAD…QGIRVTSLGG (301 aa). Residues 973–1277 form the PKS/mFAS DH domain; it reads HELLGTLSAD…VTSLGGDVAA (305 aa). His1005 serves as the catalytic Proton acceptor; for dehydratase activity. A C-terminal hotdog fold region spans residues 1131-1277; sequence THGTIPQKFY…VTSLGGDVAA (147 aa). The Proton donor; for dehydratase activity role is filled by Asp1193. The methyltransferase (CMet) domain stretch occupies residues 1395-1625; it reads KTSALSLLTK…VFISTAPFPR (231 aa). Positions 1834–2146 are enoyl reductase (ER) domain; sequence GLLETIRWKD…AGKHTGKIVL (313 aa). The 78-residue stretch at 2452–2529 folds into the Carrier domain; sequence EAVHIVTNAI…QLAAIVAKES (78 aa). Residues 2453-2526 form a ketoreductase (KR) domain region; it reads AVHIVTNAIL…SISQLAAIVA (74 aa). An O-(pantetheine 4'-phosphoryl)serine modification is found at Ser2489.

The protein operates within antibiotic biosynthesis. In terms of biological role, polyketide synthase; part of the gene cluster that mediates the biosynthesis of emericellamides, secondary metabolites acting as antibiotics. The biosynthesis of emericellamides initiates from the highly reducing polyketide synthase easB which catalyzes the formation of the linear polyketide chain. EasB produces several polyketides that can be further processed by the downstream enzymes. The polyketides are released from easB as linear polyketide carboxylic acids, which are converted to CoA thioesters by the acyl-CoA ligase easD. The substrates are then loaded onto the acyltransferase easC, which shuttles them to the first thiolation (T) domain of the nonribosomal peptide synthetase easA. EasA then performs condensation of the polyketides with one glycine, two alanine, one valine and one leucine residues. A last step of cyclization leads to the production of emericellamides. The protein is Highly reducing polyketide synthase easB of Emericella nidulans (strain FGSC A4 / ATCC 38163 / CBS 112.46 / NRRL 194 / M139) (Aspergillus nidulans).